Consider the following 353-residue polypeptide: Photosystem II protein D1 (353 aa).

Thr-2 is subject to N-acetylthreonine. Thr-2 carries the phosphothreonine modification. 3 helical membrane-spanning segments follow: residues Tyr-29 to Ser-46, His-118 to Leu-133, and Trp-142 to Ala-156. A chlorophyll a-binding site is contributed by His-118. Tyr-126 provides a ligand contact to pheophytin a. The [CaMn4O5] cluster site is built by Asp-170 and Glu-189. A helical membrane pass occupies residues Phe-197–Leu-218. His-198 is a binding site for chlorophyll a. Residues His-215 and Ser-264–Phe-265 contribute to the a quinone site. His-215 lines the Fe cation pocket. His-272 provides a ligand contact to Fe cation. Residues Phe-274–Leu-288 traverse the membrane as a helical segment. [CaMn4O5] cluster contacts are provided by His-332, Glu-333, Asp-342, and Ala-344. Positions Ala-345 to Gly-353 are excised as a propeptide.

Belongs to the reaction center PufL/M/PsbA/D family. As to quaternary structure, PSII is composed of 1 copy each of membrane proteins PsbA, PsbB, PsbC, PsbD, PsbE, PsbF, PsbH, PsbI, PsbJ, PsbK, PsbL, PsbM, PsbT, PsbX, PsbY, PsbZ, Psb30/Ycf12, at least 3 peripheral proteins of the oxygen-evolving complex and a large number of cofactors. It forms dimeric complexes. The cofactor is The D1/D2 heterodimer binds P680, chlorophylls that are the primary electron donor of PSII, and subsequent electron acceptors. It shares a non-heme iron and each subunit binds pheophytin, quinone, additional chlorophylls, carotenoids and lipids. D1 provides most of the ligands for the Mn4-Ca-O5 cluster of the oxygen-evolving complex (OEC). There is also a Cl(-1) ion associated with D1 and D2, which is required for oxygen evolution. The PSII complex binds additional chlorophylls, carotenoids and specific lipids.. Post-translationally, tyr-161 forms a radical intermediate that is referred to as redox-active TyrZ, YZ or Y-Z. In terms of processing, C-terminally processed by CTPA; processing is essential to allow assembly of the oxygen-evolving complex and thus photosynthetic growth.

Its subcellular location is the plastid. The protein localises to the chloroplast thylakoid membrane. It carries out the reaction 2 a plastoquinone + 4 hnu + 2 H2O = 2 a plastoquinol + O2. Its function is as follows. Photosystem II (PSII) is a light-driven water:plastoquinone oxidoreductase that uses light energy to abstract electrons from H(2)O, generating O(2) and a proton gradient subsequently used for ATP formation. It consists of a core antenna complex that captures photons, and an electron transfer chain that converts photonic excitation into a charge separation. The D1/D2 (PsbA/PsbD) reaction center heterodimer binds P680, the primary electron donor of PSII as well as several subsequent electron acceptors. The chain is Photosystem II protein D1 from Lemna minor (Common duckweed).